Reading from the N-terminus, the 436-residue chain is Protein GOLM2 (436 aa).

At methionine 1 the chain carries N-acetylmethionine. Over 1 to 14 (MVGFGANRRAGRLP) the chain is Cytoplasmic. The chain crosses the membrane as a helical; Signal-anchor for type II membrane protein span at residues 15–35 (SLVLVVLLVVIVVLAFNYWSI). Residues 35–198 (ISSRHVLLQE…EEQKQETQKI (164 aa)) are a coiled coil. Residues 36-436 (SSRHVLLQEE…YGKQHFNDVL (401 aa)) lie on the Lumenal side of the membrane. The span at 225-247 (ADKNEEPSSNHIPHGKEQIKRGG) shows a compositional bias: basic and acidic residues. Residues 225–436 (ADKNEEPSSN…YGKQHFNDVL (212 aa)) form a disordered region. 2 positions are modified to phosphoserine: serine 233 and serine 275. Residues 305 to 321 (NHNGNPGTSKQNPSSPL) show a composition bias toward polar residues. 2 positions are modified to phosphoserine: serine 328 and serine 332. Over residues 344–362 (ATKDRVSDFHKLKQSRFFD) the composition is skewed to basic and acidic residues. The residue at position 366 (serine 366) is a Phosphoserine. The segment covering 399-418 (YNEEEDGDGGEEDVQDDEER) has biased composition (acidic residues). The segment covering 426–436 (DYGKQHFNDVL) has biased composition (basic and acidic residues).

It belongs to the GOLM family.

The protein localises to the membrane. The polypeptide is Protein GOLM2 (Homo sapiens (Human)).